We begin with the raw amino-acid sequence, 313 residues long: BTB/POZ domain-containing adapter for CUL3-mediated RhoA degradation protein 3 (313 aa).

The residue at position 1 (methionine 1) is an N-acetylmethionine. Residue serine 23 is modified to Phosphoserine. One can recognise a BTB domain in the interval lysine 32–glutamate 100. The PCNA-binding motif lies at glutamine 239 to proline 245.

Belongs to the BACURD family. As to quaternary structure, homotetramer; forms a two-fold symmetric tetramer in solution. Interacts with CUL3; interaction is direct and forms a 5:5 heterodecamer. Component of the BCR(BACURD3) E3 ubiquitin ligase complex, at least composed of CUL3, KCTD10/BACURD3 and RBX1. Interacts with DNA polymerase delta subunit 2/POLD2. Interacts with PCNA.

The protein localises to the nucleus. It functions in the pathway protein modification; protein ubiquitination. Functionally, substrate-specific adapter of a BCR (BTB-CUL3-RBX1) E3 ubiquitin-protein ligase complex. The BCR(BACURD3) E3 ubiquitin ligase complex mediates the ubiquitination of target proteins, leading to their degradation by the proteasome. The polypeptide is BTB/POZ domain-containing adapter for CUL3-mediated RhoA degradation protein 3 (KCTD10) (Homo sapiens (Human)).